We begin with the raw amino-acid sequence, 205 residues long: High frequency lysogenization protein HflD homolog (205 aa).

It belongs to the HflD family.

Its subcellular location is the cytoplasm. It is found in the cell inner membrane. The chain is High frequency lysogenization protein HflD homolog from Shewanella halifaxensis (strain HAW-EB4).